The following is a 305-amino-acid chain: Fructose-bisphosphate aldolase (305 aa).

Ser-49 is a binding site for D-glyceraldehyde 3-phosphate. The active-site Proton donor is the Asp-80. Zn(2+) contacts are provided by His-81, Asp-102, Glu-132, and His-178. Gly-179 is a dihydroxyacetone phosphate binding site. His-208 is a Zn(2+) binding site. Residues 209–211 and 251–254 contribute to the dihydroxyacetone phosphate site; these read GAS and NTDT.

It belongs to the class II fructose-bisphosphate aldolase family. In terms of assembly, homotetramer. It depends on Zn(2+) as a cofactor.

It carries out the reaction beta-D-fructose 1,6-bisphosphate = D-glyceraldehyde 3-phosphate + dihydroxyacetone phosphate. The protein operates within carbohydrate degradation; glycolysis; D-glyceraldehyde 3-phosphate and glycerone phosphate from D-glucose: step 4/4. Catalyzes the aldol condensation of dihydroxyacetone phosphate (DHAP or glycerone-phosphate) with glyceraldehyde 3-phosphate (G3P) to form fructose 1,6-bisphosphate (FBP) in gluconeogenesis and the reverse reaction in glycolysis. The polypeptide is Fructose-bisphosphate aldolase (Thermus caldophilus).